Reading from the N-terminus, the 59-residue chain is Bdellastasin (59 aa).

5 disulfides stabilise this stretch: Cys-10/Cys-21, Cys-15/Cys-26, Cys-28/Cys-48, Cys-33/Cys-52, and Cys-37/Cys-54. The Antistasin-like domain maps to 28 to 54 (CSDLHCKVKCEHGFKKDDNGCEYACIC).

Its subcellular location is the secreted. Functionally, strong inhibitor of mammalian trypsin, plasmin and acrosin. This is Bdellastasin from Hirudo medicinalis (Medicinal leech).